A 137-amino-acid polypeptide reads, in one-letter code: Large ribosomal subunit protein uL16 (137 aa).

This sequence belongs to the universal ribosomal protein uL16 family. Part of the 50S ribosomal subunit.

In terms of biological role, binds 23S rRNA and is also seen to make contacts with the A and possibly P site tRNAs. The chain is Large ribosomal subunit protein uL16 from Bartonella bacilliformis (strain ATCC 35685 / KC583 / Herrer 020/F12,63).